Consider the following 252-residue polypeptide: Ubiquinone biosynthesis protein COQ4 homolog 1, mitochondrial (252 aa).

Residues H130, D131, H134, and E146 each coordinate Zn(2+).

This sequence belongs to the COQ4 family. Component of a multi-subunit COQ enzyme complex. Requires Zn(2+) as cofactor.

It localises to the mitochondrion inner membrane. It carries out the reaction a 4-hydroxy-3-methoxy-5-(all-trans-polyprenyl)benzoate + H(+) = a 2-methoxy-6-(all-trans-polyprenyl)phenol + CO2. It participates in cofactor biosynthesis; ubiquinone biosynthesis. In terms of biological role, lyase that catalyzes the C1-decarboxylation of 4-hydroxy-3-methoxy-5-(all-trans-polyprenyl)benzoic acid into 2-methoxy-6-(all-trans-polyprenyl)phenol during ubiquinone biosynthesis. This chain is Ubiquinone biosynthesis protein COQ4 homolog 1, mitochondrial, found in Trypanosoma cruzi (strain CL Brener).